The chain runs to 335 residues: Ankyrin repeat and SOCS box protein 1 (335 aa).

ANK repeat units lie at residues 36–68 (CEDTRLHDAAYVGDLQTLRSLLQEESYRSRINE), 77–106 (LPCTPLRIAATAGHGSCVDFLIRKGAEVDL), 110–139 (KGQTALYVAVVNGHLESTQILLEAGADPNG), 143–172 (HRSTPVYHASRVGRADILKALIRYGADVDV), 191–220 (LVVCPLYISAAYHNLQCFRLLLLAGANPDF), and 235–265 (SPGCVMDAVLRHGCEAAFVSLLVEFGANLNL). In terms of domain architecture, SOCS box spans 286–335 (LQVFKEARSVPRTLLCLCRVAVRRALGKHRLHLIPSLPLPDPIKKFLLHE).

The protein belongs to the ankyrin SOCS box (ASB) family. As to quaternary structure, interacts with CUL5 and RNF7. Interacts with TAB2 and TAB3.

Its subcellular location is the cytoplasm. It participates in protein modification; protein ubiquitination. Its function is as follows. Probable substrate-recognition component of a SCF-like ECS (Elongin-Cullin-SOCS-box protein) E3 ligase complex which mediates the ubiquitination and subsequent proteasomal degradation of target proteins. Mediates Notch-induced ubiquitination and degradation of TCF3/E2A and JAK2. Functions as a tumor suppressor by enhancing CHCHD3 'Lys-48'-linked ubiquitination, leading to inhibition of the CHCHD3/ROS signaling pathway. Suppresses TAB2-linked 'Lys-48' polyubiquitination and consequently facilitates the initiation of NF-kappa-B and MAPK signaling cascades. May play a role in testis development. The chain is Ankyrin repeat and SOCS box protein 1 (ASB1) from Homo sapiens (Human).